Here is a 335-residue protein sequence, read N- to C-terminus: 3-ketodihydrosphingosine reductase TSC10 (335 aa).

NADPH-binding residues include glycine 42, serine 44, serine 45, glycine 46, arginine 67, aspartate 68, lysine 71, aspartate 95, and leucine 96. A GXSXG motif is present at residues 42–46 (GGSSG). The tract at residues 141–207 (LKDGLDGVYW…RGLSDALRSE (67 aa)) is involved in homodimer formation. Residue tyrosine 190 is the Proton acceptor of the active site. NADP(+)-binding residues include tyrosine 190, lysine 194, and isoleucine 223. Catalysis depends on lysine 194, which acts as the Lowers pKa of active site Tyr. The chain crosses the membrane as a helical span at residues 288-308 (TNNFLLDTLWLIVSSVGVPIW).

The protein belongs to the short-chain dehydrogenases/reductases (SDR) family. In terms of assembly, homodimer; a minor portion forms homotetramers.

The protein localises to the endoplasmic reticulum membrane. It catalyses the reaction sphinganine + NADP(+) = 3-oxosphinganine + NADPH + H(+). It participates in lipid metabolism; sphingolipid metabolism. Its function is as follows. Catalyzes the reduction of 3'-oxosphinganine (3-ketodihydrosphingosine/KDS) to sphinganine (dihydrosphingosine/DHS), the second step of de novo sphingolipid biosynthesis. The sequence is that of 3-ketodihydrosphingosine reductase TSC10 (TSC10) from Cryptococcus neoformans var. neoformans serotype D (strain JEC21 / ATCC MYA-565) (Filobasidiella neoformans).